A 380-amino-acid chain; its full sequence is Queuine tRNA-ribosyltransferase (380 aa).

Residue aspartate 95 is the Proton acceptor of the active site. Residues 95–99 (DSGGF), aspartate 149, glutamine 192, and glycine 219 each bind substrate. Residues 250 to 256 (GVGSPDA) are RNA binding. Aspartate 269 acts as the Nucleophile in catalysis. Positions 274 to 278 (TRIAR) are RNA binding; important for wobble base 34 recognition. Zn(2+) is bound by residues cysteine 307, cysteine 309, cysteine 312, and histidine 338.

It belongs to the queuine tRNA-ribosyltransferase family. As to quaternary structure, homodimer. Within each dimer, one monomer is responsible for RNA recognition and catalysis, while the other monomer binds to the replacement base PreQ1. It depends on Zn(2+) as a cofactor.

It carries out the reaction 7-aminomethyl-7-carbaguanine + guanosine(34) in tRNA = 7-aminomethyl-7-carbaguanosine(34) in tRNA + guanine. It participates in tRNA modification; tRNA-queuosine biosynthesis. Catalyzes the base-exchange of a guanine (G) residue with the queuine precursor 7-aminomethyl-7-deazaguanine (PreQ1) at position 34 (anticodon wobble position) in tRNAs with GU(N) anticodons (tRNA-Asp, -Asn, -His and -Tyr). Catalysis occurs through a double-displacement mechanism. The nucleophile active site attacks the C1' of nucleotide 34 to detach the guanine base from the RNA, forming a covalent enzyme-RNA intermediate. The proton acceptor active site deprotonates the incoming PreQ1, allowing a nucleophilic attack on the C1' of the ribose to form the product. After dissociation, two additional enzymatic reactions on the tRNA convert PreQ1 to queuine (Q), resulting in the hypermodified nucleoside queuosine (7-(((4,5-cis-dihydroxy-2-cyclopenten-1-yl)amino)methyl)-7-deazaguanosine). The chain is Queuine tRNA-ribosyltransferase from Pediococcus pentosaceus (strain ATCC 25745 / CCUG 21536 / LMG 10740 / 183-1w).